The following is a 184-amino-acid chain: Ras-related protein Rap-1A (184 aa).

GTP is bound by residues 10–18, 29–35, Gly60, and 116–119; these read GSGGVGKSA, VEKYDPT, and NKCD. The Effector region motif lies at 32 to 40; the sequence is YDPTIEDSY. The residue at position 181 (Cys181) is a Cysteine methyl ester. Cys181 is lipidated: S-geranylgeranyl cysteine. Positions 182–184 are cleaved as a propeptide — removed in mature form; the sequence is LLL.

It belongs to the small GTPase superfamily. Ras family. As to quaternary structure, found in a complex, at least composed of ITGB1BP1, KRIT1 and RAP1A. Interacts (active GTP-bound form preferentially) with KRIT1 (via C-terminus FERM domain); the interaction does not induce the opening conformation of KRIT1. Found in a complex composed of CDH1, RAP1A and PKP3; PKP3 acts as a scaffold protein within the complex, the complex is required for CDH1 localization to mature desmosome cell junctions. In its GTP-bound form interacts with PLCE1 and RADIL. Interacts with SGSM1, SGSM2 and SGSM3. Interacts (via GTP-bound active form) with RAPGEF2 (via Ras-associating domain). Interacts with TBC1D21. Interacts with RAP1GDS1.

The protein localises to the cell membrane. It is found in the cytoplasm. It localises to the perinuclear region. The protein resides in the cell junction. Its subcellular location is the early endosome. The enzyme catalyses GTP + H2O = GDP + phosphate + H(+). With respect to regulation, activated by guanine nucleotide-exchange factors (GEF) EPAC and EPAC2 in a cAMP-dependent manner, and GFR. In terms of biological role, counteracts the mitogenic function of Ras, at least partly because it can interact with Ras GAPs and RAF in a competitive manner. Together with ITGB1BP1, regulates KRIT1 localization to microtubules and membranes. Plays a role in nerve growth factor (NGF)-induced neurite outgrowth. Plays a role in the regulation of embryonic blood vessel formation. Involved in the establishment of basal endothelial barrier function. Facilitates the progressive accumulation of CDH1 at mature desmosome junctions via cAMP-dependent signaling and its interaction with PKP3. May be involved in the regulation of the vascular endothelial growth factor receptor KDR expression at endothelial cell-cell junctions. This is Ras-related protein Rap-1A (RAP1A) from Bos taurus (Bovine).